The chain runs to 1775 residues: Internalin I (1775 aa).

Residues 1-28 form the signal peptide; it reads MKKKFSIVIISVLLLGYLAPFDTLLVGA. Over residues 36–50 the composition is skewed to low complexity; that stretch reads DTTVKTAETETATEA. Residues 36–97 form a disordered region; the sequence is DTTVKTAETE…SNIKTEINTD (62 aa). Residues 58-85 show a composition bias toward basic and acidic residues; sequence DNEKAEEPKEAEASKETTEKEEKAKTKE. LRR repeat units lie at residues 152-176, 180-201, 202-224, 225-247, 248-269, 274-295, 296-318, 319-341, 342-364, 365-386, 387-409, 410-431, 432-453, 454-475, 476-497, 498-519, 520-541, 542-563, 564-585, 586-607, 608-629, 630-650, 654-675, 682-704, 705-726, 727-748, and 749-770; these read AISQ…EGLQ, NLTS…KDLV, NLVS…EGLV, NLQE…AALP, VLKE…NPAG, ELET…AKLP, KLKN…KGAT, KLQL…SGLS, ELEM…KDLP, NLVN…NNLP, KLQT…TDMP, QLKT…DNLP, KLEK…NDLP, RLSY…KKLP, LLEW…TNFP, SLNY…TELP, SLKE…HDMP, NLRK…DNLP, KLQN…HDLP, SLET…DNLP, ELTY…GDLP, KLEI…GTMD, KLRN…GNLS, NLTE…STLS, RLIY…SNLT, TLQE…SDLD, and NLNK…ANMV. The LRRCT domain occupies 782-869; sequence TYTLPTVLSY…SAVKVTANAE (88 aa). 3 MucBP domains span residues 1507–1566, 1572–1631, and 1641–1702; these read DAAA…EQTV, AIEP…PQTI, and SKKS…SQTV. The interval 1713 to 1737 is disordered; sequence SKDEPKVKGKTNQPPSADTKLKVDN. The LPXTG sorting signal signature appears at 1740-1744; it reads LPATG. At T1743 the chain carries Pentaglycyl murein peptidoglycan amidated threonine. A propeptide spans 1744-1775 (removed by sortase); sequence GDTENMALAVLIGFNMLLVASIFLFRKPKTNQ.

The protein belongs to the internalin family.

Its subcellular location is the secreted. It localises to the cell wall. Functionally, a role in virulence could not be demonstrated. The polypeptide is Internalin I (inlI) (Listeria monocytogenes serotype 4b (strain F2365)).